A 274-amino-acid polypeptide reads, in one-letter code: Thiazole synthase (274 aa).

Residue Lys115 is the Schiff-base intermediate with DXP of the active site. 1-deoxy-D-xylulose 5-phosphate is bound by residues Gly176, 202-203, and 224-225; these read AG and NS.

It belongs to the ThiG family. As to quaternary structure, homotetramer. Forms heterodimers with either ThiH or ThiS.

It is found in the cytoplasm. The enzyme catalyses [ThiS sulfur-carrier protein]-C-terminal-Gly-aminoethanethioate + 2-iminoacetate + 1-deoxy-D-xylulose 5-phosphate = [ThiS sulfur-carrier protein]-C-terminal Gly-Gly + 2-[(2R,5Z)-2-carboxy-4-methylthiazol-5(2H)-ylidene]ethyl phosphate + 2 H2O + H(+). Its pathway is cofactor biosynthesis; thiamine diphosphate biosynthesis. In terms of biological role, catalyzes the rearrangement of 1-deoxy-D-xylulose 5-phosphate (DXP) to produce the thiazole phosphate moiety of thiamine. Sulfur is provided by the thiocarboxylate moiety of the carrier protein ThiS. In vitro, sulfur can be provided by H(2)S. This is Thiazole synthase from Psychrobacter arcticus (strain DSM 17307 / VKM B-2377 / 273-4).